The chain runs to 400 residues: Ribosomal RNA large subunit methyltransferase I (400 aa).

Positions 6 to 84 (FPRLVLAKGR…NEAIDSAFFE (79 aa)) constitute a PUA domain.

This sequence belongs to the methyltransferase superfamily. RlmI family.

The protein resides in the cytoplasm. It carries out the reaction cytidine(1962) in 23S rRNA + S-adenosyl-L-methionine = 5-methylcytidine(1962) in 23S rRNA + S-adenosyl-L-homocysteine + H(+). Its function is as follows. Specifically methylates the cytosine at position 1962 (m5C1962) of 23S rRNA. The chain is Ribosomal RNA large subunit methyltransferase I from Klebsiella pneumoniae (strain 342).